The following is a 49-amino-acid chain: uncharacterized protein (49 aa).

The chain crosses the membrane as a helical span at residues 16–36 (WTCHTGFYLMILLVLFFMYGF).

The protein localises to the cell membrane. This is an uncharacterized protein from Bacillus subtilis (strain 168).